Reading from the N-terminus, the 247-residue chain is tRNA pseudouridine synthase A (247 aa).

D53 (nucleophile) is an active-site residue. Residue Y111 coordinates substrate.

It belongs to the tRNA pseudouridine synthase TruA family. Homodimer.

The catalysed reaction is uridine(38/39/40) in tRNA = pseudouridine(38/39/40) in tRNA. Functionally, formation of pseudouridine at positions 38, 39 and 40 in the anticodon stem and loop of transfer RNAs. The chain is tRNA pseudouridine synthase A from Bacillus pumilus (strain SAFR-032).